The primary structure comprises 157 residues: Phosphopantetheine adenylyltransferase (157 aa).

Residue T10 coordinates substrate. ATP contacts are provided by residues 10 to 11 (TF) and H18. Substrate contacts are provided by K42, L74, and R88. Residues 89–91 (GLR), E99, and 124–130 (NAFISSS) contribute to the ATP site.

It belongs to the bacterial CoaD family. In terms of assembly, homohexamer. Mg(2+) serves as cofactor.

Its subcellular location is the cytoplasm. The catalysed reaction is (R)-4'-phosphopantetheine + ATP + H(+) = 3'-dephospho-CoA + diphosphate. Its pathway is cofactor biosynthesis; coenzyme A biosynthesis; CoA from (R)-pantothenate: step 4/5. Its function is as follows. Reversibly transfers an adenylyl group from ATP to 4'-phosphopantetheine, yielding dephospho-CoA (dPCoA) and pyrophosphate. The chain is Phosphopantetheine adenylyltransferase from Helicobacter pylori (strain P12).